The primary structure comprises 125 residues: Large ribosomal subunit protein uL22 (125 aa).

Belongs to the universal ribosomal protein uL22 family. In terms of assembly, part of the 50S ribosomal subunit.

In terms of biological role, this protein binds specifically to 23S rRNA; its binding is stimulated by other ribosomal proteins, e.g. L4, L17, and L20. It is important during the early stages of 50S assembly. It makes multiple contacts with different domains of the 23S rRNA in the assembled 50S subunit and ribosome. Functionally, the globular domain of the protein is located near the polypeptide exit tunnel on the outside of the subunit, while an extended beta-hairpin is found that lines the wall of the exit tunnel in the center of the 70S ribosome. The sequence is that of Large ribosomal subunit protein uL22 from Acetivibrio thermocellus (strain ATCC 27405 / DSM 1237 / JCM 9322 / NBRC 103400 / NCIMB 10682 / NRRL B-4536 / VPI 7372) (Clostridium thermocellum).